A 37-amino-acid polypeptide reads, in one-letter code: Large ribosomal subunit protein bL36 (37 aa).

The protein belongs to the bacterial ribosomal protein bL36 family.

This is Large ribosomal subunit protein bL36 from Pasteurella multocida (strain Pm70).